The primary structure comprises 86 residues: Muscarinic toxin 2 (86 aa).

A signal peptide spans 1–21; that stretch reads MKTLLLTLVVVTIVCLDLGYT. Disulfide bonds link Cys24/Cys45, Cys38/Cys63, Cys67/Cys78, and Cys79/Cys84.

Belongs to the three-finger toxin family. Short-chain subfamily. Aminergic toxin sub-subfamily. As to quaternary structure, monomer. Expressed by the venom gland.

Its subcellular location is the secreted. Its function is as follows. Binds irreversibly to M1 (CHRM1) muscarinic acetylcholine receptors, and reveals a slightly weaker effect on M3 (CHRM3) receptors. The mechanism of toxin-receptor interaction comprises at least two steps. The first step is fast with no competition between the toxin and the antagonist. The second step is slow with formation of a more stable toxin-receptor complex and inhibition of the antagonist binding. The polypeptide is Muscarinic toxin 2 (Dendroaspis angusticeps (Eastern green mamba)).